Reading from the N-terminus, the 2273-residue chain is Nonribosomal peptide synthetase hasD (2273 aa).

Positions 100–446 are adenylation 1; that stretch reads FHDQLQKHSS…AGLGLALGYF (347 aa). A Carrier 1 domain is found at 588-664; that stretch reads ERGLGAVESV…NIAAAVVELS (77 aa). An O-(pantetheine 4'-phosphoryl)serine modification is found at serine 625. Residues 696–1120 are condensation 1; that stretch reads IAPMTDMQTR…AAQPDTDLSN (425 aa). An adenylation 2 region spans residues 1156 to 1487; that stretch reads ENSIQAHPDI…SGVQVTPGYL (332 aa). The Carrier 2 domain occupies 1634 to 1714; it reads DLETDTQRVL…DLSLAIDELV (81 aa). Serine 1673 is modified (O-(pantetheine 4'-phosphoryl)serine). The interval 1735–2127 is condensation 2; the sequence is GQLPLSYLEK…QDLEVDMEYD (393 aa). Residues 2174-2200 form a disordered region; it reads PVGLTPSHEGSAELTNGTNKTDSTTGQ. The span at 2186 to 2200 shows a compositional bias: polar residues; it reads ELTNGTNKTDSTTGQ. The Carrier 3 domain maps to 2201–2273; that stretch reads QELENNLTDV…LELATCAVII (73 aa). Residue serine 2235 is modified to O-(pantetheine 4'-phosphoryl)serine.

It belongs to the NRP synthetase family. Requires pantetheine 4'-phosphate as cofactor.

It participates in secondary metabolite biosynthesis. In terms of biological role, nonribosomal peptide synthetase; part of the gene cluster that mediates the biosynthesis of hexadehydro-astechrome (HAS), a tryptophan-derived iron(III)-complex that acts as a virulence factor in infected mice. Within the pathway, the NRPS condenses tryptophan and alanine to produce the Trp-Ala dipeptide. The 7-dimethylallyltryptophan synthase hasE then catalyzes the prenylation of the hasD-tethered tryptophan or the resulting tethered Trp-Ala dipeptide at the C-7 position of the indole moiety. HAS biosynthesis continues via tethered intermediates with the succesive actions of the cytochrome P450 monooxygenase hasH, the O-methyltransferase hasC, and the FAD-linked oxidoreductase hasG. The resulting O-methylated diketopiperazine is then released from hasD. Finally, three O-methylated diketopiperazine molecules assemble in a trimeric complex with Fe(III) to produce hexadehydro-astechrome. This is Nonribosomal peptide synthetase hasD from Aspergillus fumigatus (strain CBS 144.89 / FGSC A1163 / CEA10) (Neosartorya fumigata).